A 614-amino-acid chain; its full sequence is Protein NRT1/ PTR FAMILY 7.3 (614 aa).

The next 2 helical transmembrane spans lie at 41–61 (WVAGIVILLNQGLATLAFFGV) and 87–107 (WTGTVYIFSLVGAFLSDSYWG). Thr-111 carries the phosphothreonine modification. Helical transmembrane passes span 114–134 (IFQVIFVIGLSSLSLSSYMFL), 152–172 (MMEITMFYFSIYLIALGYGGY), 196–216 (IAFFSYFYLALNLGSLFSNTI), 226–246 (WALGFWASTGSAIIGLILFLV), 355–375 (PIWLCTIIYSVVFTQMASLFV), 390–410 (IPPASMSSFDILSVALFIFLY), 435–455 (MGIGLVIAVIAMIAAGIVECY), 515–535 (LCMMSMSMGNFVSSLLVTMVV), and 559–579 (FYFLLAALTSIDLVVYIACAK). Residues 592–614 (MQDMSDDDYDTESEEEREKDSKV) form a disordered region. Over residues 593 to 606 (QDMSDDDYDTESEE) the composition is skewed to acidic residues.

Belongs to the major facilitator superfamily. Proton-dependent oligopeptide transporter (POT/PTR) (TC 2.A.17) family. As to expression, high expression in roots. Barely detected in shoots. Expressed in root pericycle cells close to the xylem.

It localises to the cell membrane. In terms of biological role, low-affinity proton-dependent bidirectional nitrate transporter. Involved in nitrate loading into xylem and not in nitrate uptake. Not involved in histidine or dipeptides transport. This is Protein NRT1/ PTR FAMILY 7.3 (NPF7.3) from Arabidopsis thaliana (Mouse-ear cress).